The chain runs to 484 residues: Zinc metalloproteinase/disintegrin PMMP-2 (484 aa).

The signal sequence occupies residues 1 to 20 (MIQVLLVTICLAVFPYQGSS). Residues 21-190 (IILESGNVDD…KASQLNLTPL (170 aa)) constitute a propeptide that is removed on maturation. A Peptidase M12B domain is found at 197-395 (RYVKLAIVVD…YNPQCILNAP (199 aa)). N-linked (GlcNAc...) asparagine glycosylation occurs at asparagine 239. Disulfide bonds link cysteine 308/cysteine 390, cysteine 352/cysteine 374, and cysteine 354/cysteine 357. Residue histidine 333 coordinates Zn(2+). Glutamate 334 is a catalytic residue. The Zn(2+) site is built by histidine 337 and histidine 343. Residues 396–413 (LRTDTVSTPVSGNEFLEA) constitute a propeptide that is removed on maturation. One can recognise a Disintegrin domain in the interval 403–484 (TPVSGNEFLE…ADCPRNGLYG (82 aa)). 6 cysteine pairs are disulfide-bonded: cysteine 417-cysteine 432, cysteine 419-cysteine 427, cysteine 426-cysteine 449, cysteine 440-cysteine 446, cysteine 445-cysteine 470, and cysteine 458-cysteine 477. The Cell attachment site signature appears at 462–464 (RGD).

It belongs to the venom metalloproteinase (M12B) family. P-II subfamily. P-IIa sub-subfamily. In terms of assembly, monomer. Zn(2+) serves as cofactor. Expressed by the venom gland.

The protein resides in the secreted. In terms of biological role, impairs hemostasis in the envenomed animal. Its function is as follows. Inhibits platelet aggregation induced by ADP, thrombin, platelet-activating factor and collagen. Acts by inhibiting fibrinogen interaction with platelet receptors GPIIb/GPIIIa (ITGA2B/ITGB3). The protein is Zinc metalloproteinase/disintegrin PMMP-2 of Protobothrops mucrosquamatus (Taiwan habu).